Here is a 338-residue protein sequence, read N- to C-terminus: GTPase Obg (338 aa).

Residues 1–159 (MSFIDEVKIH…RWLRLELKLM (159 aa)) form the Obg domain. In terms of domain architecture, OBG-type G spans 160 to 331 (ADVGLLGMPS…LLDEIARNLW (172 aa)). GTP contacts are provided by residues 166 to 173 (GMPSVGKS), 191 to 195 (FTTLK), 213 to 216 (DIPG), 283 to 286 (NKID), and 312 to 314 (SAA). Residues Ser-173 and Thr-193 each coordinate Mg(2+).

It belongs to the TRAFAC class OBG-HflX-like GTPase superfamily. OBG GTPase family. Monomer. It depends on Mg(2+) as a cofactor.

It is found in the cytoplasm. Functionally, an essential GTPase which binds GTP, GDP and possibly (p)ppGpp with moderate affinity, with high nucleotide exchange rates and a fairly low GTP hydrolysis rate. Plays a role in control of the cell cycle, stress response, ribosome biogenesis and in those bacteria that undergo differentiation, in morphogenesis control. The sequence is that of GTPase Obg from Geotalea uraniireducens (strain Rf4) (Geobacter uraniireducens).